The sequence spans 229 residues: Small ribosomal subunit protein uS3 (229 aa).

Positions V39–R107 constitute a KH type-2 domain.

This sequence belongs to the universal ribosomal protein uS3 family. Part of the 30S ribosomal subunit. Forms a tight complex with proteins S10 and S14.

Its function is as follows. Binds the lower part of the 30S subunit head. Binds mRNA in the 70S ribosome, positioning it for translation. This Shewanella frigidimarina (strain NCIMB 400) protein is Small ribosomal subunit protein uS3.